The sequence spans 431 residues: Putative helicase 055L (431 aa).

In terms of domain architecture, Helicase ATP-binding spans 73 to 222 (WGHVTSKGYC…ALGAFFGRED (150 aa)). 86–93 (CPPGFGKT) contacts ATP. The short motif at 175–178 (DEAH) is the DEAH box element. The interval 403–431 (KCDASRPSQSTPTPTGSSQPAPRTRRPQR) is disordered. Positions 407 to 424 (SRPSQSTPTPTGSSQPAP) are enriched in low complexity.

In Frog virus 3 (isolate Goorha) (FV-3), this protein is Putative helicase 055L.